A 284-amino-acid chain; its full sequence is Tropomyosin alpha-1 chain (284 aa).

The disordered stretch occupies residues M1–E40. A coiled-coil region spans residues M1–I284. Residues K12–E40 show a composition bias toward basic and acidic residues.

It belongs to the tropomyosin family. As to quaternary structure, homodimer. Heterodimer of an alpha (TPM1, TPM3 or TPM4) and a beta (TPM2) chain.

The protein localises to the cytoplasm. The protein resides in the cytoskeleton. Binds to actin filaments in muscle and non-muscle cells. Plays a central role, in association with the troponin complex, in the calcium dependent regulation of vertebrate striated muscle contraction. Smooth muscle contraction is regulated by interaction with caldesmon. In non-muscle cells is implicated in stabilizing cytoskeleton actin filaments. The polypeptide is Tropomyosin alpha-1 chain (tpm1) (Rana temporaria (European common frog)).